The following is a 301-amino-acid chain: Nucleotide-binding protein MAB_2783c (301 aa).

24 to 31 lines the ATP pocket; the sequence is GLSGAGRG. 75–78 serves as a coordination point for GTP; it reads DVRS.

This sequence belongs to the RapZ-like family.

In terms of biological role, displays ATPase and GTPase activities. This chain is Nucleotide-binding protein MAB_2783c, found in Mycobacteroides abscessus (strain ATCC 19977 / DSM 44196 / CCUG 20993 / CIP 104536 / JCM 13569 / NCTC 13031 / TMC 1543 / L948) (Mycobacterium abscessus).